The chain runs to 205 residues: Imidazoleglycerol-phosphate dehydratase (205 aa).

The protein belongs to the imidazoleglycerol-phosphate dehydratase family.

It is found in the cytoplasm. It carries out the reaction D-erythro-1-(imidazol-4-yl)glycerol 3-phosphate = 3-(imidazol-4-yl)-2-oxopropyl phosphate + H2O. Its pathway is amino-acid biosynthesis; L-histidine biosynthesis; L-histidine from 5-phospho-alpha-D-ribose 1-diphosphate: step 6/9. The sequence is that of Imidazoleglycerol-phosphate dehydratase from Chloroflexus aggregans (strain MD-66 / DSM 9485).